Here is a 577-residue protein sequence, read N- to C-terminus: Anthranilate synthase alpha subunit 1, chloroplastic (577 aa).

Residues 1-34 constitute a chloroplast transit peptide; it reads MASLVLSLRIAPSTPPLGLGGGRFRGRRGAVACR.

This sequence belongs to the anthranilate synthase component I family. As to quaternary structure, heterotetramer consisting of two non-identical subunits: a beta subunit and a large alpha subunit.

Its subcellular location is the plastid. It is found in the chloroplast. The catalysed reaction is chorismate + L-glutamine = anthranilate + pyruvate + L-glutamate + H(+). It functions in the pathway amino-acid biosynthesis; L-tryptophan biosynthesis; L-tryptophan from chorismate: step 1/5. Its activity is regulated as follows. Feedback inhibition by tryptophan. In terms of biological role, part of a heterotetrameric complex that catalyzes the two-step biosynthesis of anthranilate, an intermediate in the biosynthesis of L-tryptophan. In the first step, the glutamine-binding beta subunit of anthranilate synthase (AS) provides the glutamine amidotransferase activity which generates ammonia as a substrate that, along with chorismate, is used in the second step, catalyzed by the large alpha subunit of AS to produce anthranilate. The polypeptide is Anthranilate synthase alpha subunit 1, chloroplastic (ASA1) (Oryza sativa subsp. indica (Rice)).